A 178-amino-acid chain; its full sequence is Small ribosomal subunit protein uS5 (178 aa).

One can recognise an S5 DRBM domain in the interval 13–76 (LEERVVQINR…EAAKRNLIRV (64 aa)). The disordered stretch occupies residues 156 to 178 (ASRRDMTPQELMERRTRRETEAA).

This sequence belongs to the universal ribosomal protein uS5 family. Part of the 30S ribosomal subunit. Contacts proteins S4 and S8.

In terms of biological role, with S4 and S12 plays an important role in translational accuracy. Functionally, located at the back of the 30S subunit body where it stabilizes the conformation of the head with respect to the body. The protein is Small ribosomal subunit protein uS5 of Chloroflexus aurantiacus (strain ATCC 29364 / DSM 637 / Y-400-fl).